The following is a 384-amino-acid chain: Flap endonuclease 1 (384 aa).

Positions 1 to 105 (MGIKGLTKLL…GELAKRKDKR (105 aa)) are N-domain. D34 contacts Mg(2+). R71 is a binding site for DNA. Residues D87, E159, E161, D180, and D182 each contribute to the Mg(2+) site. The segment at 123 to 254 (EIEKLSKRTV…VNALKYIKQY (132 aa)) is I-domain. Position 159 (E159) interacts with DNA. Positions 232 and 234 each coordinate DNA. D234 contributes to the Mg(2+) binding site. Residues 337 to 345 (GQNRLETFF) form an interaction with PCNA region. Residues 353-384 (STVGKRKEPEKGKGKFGAAGGKKSKGVTKRKF) are disordered. The segment covering 374–384 (KKSKGVTKRKF) has biased composition (basic residues).

The protein belongs to the XPG/RAD2 endonuclease family. FEN1 subfamily. In terms of assembly, interacts with PCNA. Three molecules of FEN1 bind to one PCNA trimer with each molecule binding to one PCNA monomer. PCNA stimulates the nuclease activity without altering cleavage specificity. Mg(2+) is required as a cofactor. Post-translationally, phosphorylated. Phosphorylation upon DNA damage induces relocalization to the nuclear plasma.

It is found in the nucleus. The protein localises to the nucleolus. The protein resides in the nucleoplasm. Its subcellular location is the mitochondrion. Its function is as follows. Structure-specific nuclease with 5'-flap endonuclease and 5'-3' exonuclease activities involved in DNA replication and repair. During DNA replication, cleaves the 5'-overhanging flap structure that is generated by displacement synthesis when DNA polymerase encounters the 5'-end of a downstream Okazaki fragment. It enters the flap from the 5'-end and then tracks to cleave the flap base, leaving a nick for ligation. Also involved in the long patch base excision repair (LP-BER) pathway, by cleaving within the apurinic/apyrimidinic (AP) site-terminated flap. Acts as a genome stabilization factor that prevents flaps from equilibrating into structures that lead to duplications and deletions. Also possesses 5'-3' exonuclease activity on nicked or gapped double-stranded DNA, and exhibits RNase H activity. Also involved in replication and repair of rDNA and in repairing mitochondrial DNA. The chain is Flap endonuclease 1 from Micromonas commoda (strain RCC299 / NOUM17 / CCMP2709) (Picoplanktonic green alga).